Here is a 416-residue protein sequence, read N- to C-terminus: Methylthioribose-1-phosphate isomerase (416 aa).

Catalysis depends on Asp-280, which acts as the Proton donor.

It belongs to the eIF-2B alpha/beta/delta subunits family. MtnA subfamily.

Its subcellular location is the cytoplasm. It is found in the nucleus. It carries out the reaction 5-(methylsulfanyl)-alpha-D-ribose 1-phosphate = 5-(methylsulfanyl)-D-ribulose 1-phosphate. The protein operates within amino-acid biosynthesis; L-methionine biosynthesis via salvage pathway; L-methionine from S-methyl-5-thio-alpha-D-ribose 1-phosphate: step 1/6. Its function is as follows. Catalyzes the interconversion of methylthioribose-1-phosphate (MTR-1-P) into methylthioribulose-1-phosphate (MTRu-1-P). In Candida albicans (strain SC5314 / ATCC MYA-2876) (Yeast), this protein is Methylthioribose-1-phosphate isomerase.